Reading from the N-terminus, the 491-residue chain is Glutamate--tRNA ligase (491 aa).

Positions 13 to 23 match the 'HIGH' region motif; sequence PSPTGFLHIGN. Zn(2+) contacts are provided by Cys110, Cys112, Cys137, and His139. The 'KMSKS' region signature appears at 254–258; sequence KLSKR. Position 257 (Lys257) interacts with ATP.

Belongs to the class-I aminoacyl-tRNA synthetase family. Glutamate--tRNA ligase type 1 subfamily. In terms of assembly, monomer. It depends on Zn(2+) as a cofactor.

Its subcellular location is the cytoplasm. The catalysed reaction is tRNA(Glu) + L-glutamate + ATP = L-glutamyl-tRNA(Glu) + AMP + diphosphate. Its function is as follows. Catalyzes the attachment of glutamate to tRNA(Glu) in a two-step reaction: glutamate is first activated by ATP to form Glu-AMP and then transferred to the acceptor end of tRNA(Glu). This Listeria monocytogenes serovar 1/2a (strain ATCC BAA-679 / EGD-e) protein is Glutamate--tRNA ligase.